We begin with the raw amino-acid sequence, 440 residues long: Deoxyguanosinetriphosphate triphosphohydrolase-like protein (440 aa).

The region spanning 62-255 (RLTHSLEAAQ…MELADDIAYG (194 aa)) is the HD domain.

It belongs to the dGTPase family. Type 2 subfamily.

In Vibrio parahaemolyticus serotype O3:K6 (strain RIMD 2210633), this protein is Deoxyguanosinetriphosphate triphosphohydrolase-like protein.